Reading from the N-terminus, the 131-residue chain is Inner membrane protein YecN (131 aa).

At 1–107 (MVSALYAVLS…RWRRSGMSAT (107 aa)) the chain is on the cytoplasmic side. A helical membrane pass occupies residues 108 to 128 (WCALLLMVLANLWYMPWELVF). Residues 129-131 (SLR) lie on the Periplasmic side of the membrane.

It localises to the cell inner membrane. This Escherichia coli O6:H1 (strain CFT073 / ATCC 700928 / UPEC) protein is Inner membrane protein YecN (yecN).